A 273-amino-acid chain; its full sequence is Release factor glutamine methyltransferase (273 aa).

Residues 109–113, D132, W159, and N176 each bind S-adenosyl-L-methionine; that span reads GTGSG. 176-179 lines the substrate pocket; the sequence is NPPY.

The protein belongs to the protein N5-glutamine methyltransferase family. PrmC subfamily.

The enzyme catalyses L-glutaminyl-[peptide chain release factor] + S-adenosyl-L-methionine = N(5)-methyl-L-glutaminyl-[peptide chain release factor] + S-adenosyl-L-homocysteine + H(+). Functionally, methylates the class 1 translation termination release factors RF1/PrfA and RF2/PrfB on the glutamine residue of the universally conserved GGQ motif. This is Release factor glutamine methyltransferase from Neisseria gonorrhoeae (strain ATCC 700825 / FA 1090).